A 354-amino-acid chain; its full sequence is Cytoplasmic tRNA 2-thiolation protein 1 (354 aa).

Belongs to the TtcA family. CTU1/NCS6/ATPBD3 subfamily.

The protein resides in the cytoplasm. Its pathway is tRNA modification; 5-methoxycarbonylmethyl-2-thiouridine-tRNA biosynthesis. Plays a central role in 2-thiolation of mcm(5)S(2)U at tRNA wobble positions of tRNA(Lys), tRNA(Glu) and tRNA(Gln). Directly binds tRNAs and probably acts by catalyzing adenylation of tRNAs, an intermediate required for 2-thiolation. It is unclear whether it acts as a sulfurtransferase that transfers sulfur from thiocarboxylated URM1 onto the uridine of tRNAs at wobble position. Prior mcm(5) tRNA modification by the elongator complex is required for 2-thiolation. May also be involved in protein urmylation. This is Cytoplasmic tRNA 2-thiolation protein 1 from Laccaria bicolor (strain S238N-H82 / ATCC MYA-4686) (Bicoloured deceiver).